A 168-amino-acid polypeptide reads, in one-letter code: ATP synthase subunit b (168 aa).

The helical transmembrane segment at 9 to 29 (AIPFGTIAYTLFIFLLLLVML) threads the bilayer.

This sequence belongs to the ATPase B chain family. As to quaternary structure, F-type ATPases have 2 components, F(1) - the catalytic core - and F(0) - the membrane proton channel. F(1) has five subunits: alpha(3), beta(3), gamma(1), delta(1), epsilon(1). F(0) has three main subunits: a(1), b(2) and c(10-14). The alpha and beta chains form an alternating ring which encloses part of the gamma chain. F(1) is attached to F(0) by a central stalk formed by the gamma and epsilon chains, while a peripheral stalk is formed by the delta and b chains.

The protein localises to the cell membrane. Its function is as follows. F(1)F(0) ATP synthase produces ATP from ADP in the presence of a proton or sodium gradient. F-type ATPases consist of two structural domains, F(1) containing the extramembraneous catalytic core and F(0) containing the membrane proton channel, linked together by a central stalk and a peripheral stalk. During catalysis, ATP synthesis in the catalytic domain of F(1) is coupled via a rotary mechanism of the central stalk subunits to proton translocation. Component of the F(0) channel, it forms part of the peripheral stalk, linking F(1) to F(0). This is ATP synthase subunit b from Bacillus cereus (strain ATCC 10987 / NRS 248).